We begin with the raw amino-acid sequence, 380 residues long: 3-isopropylmalate dehydratase large subunit 2 (380 aa).

Positions 262, 320, and 323 each coordinate [4Fe-4S] cluster.

The protein belongs to the aconitase/IPM isomerase family. LeuC type 2 subfamily. Heterodimer of LeuC and LeuD. The cofactor is [4Fe-4S] cluster.

It carries out the reaction (2R,3S)-3-isopropylmalate = (2S)-2-isopropylmalate. It participates in amino-acid biosynthesis; L-leucine biosynthesis; L-leucine from 3-methyl-2-oxobutanoate: step 2/4. Its function is as follows. Catalyzes the isomerization between 2-isopropylmalate and 3-isopropylmalate, via the formation of 2-isopropylmaleate. In Pyrococcus furiosus (strain ATCC 43587 / DSM 3638 / JCM 8422 / Vc1), this protein is 3-isopropylmalate dehydratase large subunit 2.